Here is a 199-residue protein sequence, read N- to C-terminus: Pectinesterase inhibitor 4 (199 aa).

The N-terminal stretch at 1–25 (MLRFVVLSLTLMVFINSSNFPKTAA) is a signal peptide. N-linked (GlcNAc...) asparagine glycosylation is found at Asn-16, Asn-33, Asn-43, and Asn-83. Cys-42 and Cys-51 are disulfide-bonded. Cysteines 109 and 158 form a disulfide.

Belongs to the PMEI family. Binds reversibly to PME3 to inhibit its activity; the stability of the PME3-PMEI4 complex and the inhibition of the pectin methylesterase (PME) activity is pH-dependent, based on protonation status of amino-acids at the complex interface. Expressed in outer cell layer of roots, particularly in the root-hair zone. Expressed in roots and siliques.

It is found in the secreted. The protein resides in the extracellular space. Its subcellular location is the apoplast. Its function is as follows. Pectin methylesterase (PME) inhibitor that can target the root-expressed PME17 and PME3 in a pH-dependent manner, mainly in slightly acidic conditions (pH 6.3 and 5.0) but not at pH 7.5; this processus relies on changes in the protonation of amino acids involved in intermolecular and intramolecular interactions. Regulate de-methylesterification of pectins in roots and affects root growth. The protein is Pectinesterase inhibitor 4 of Arabidopsis thaliana (Mouse-ear cress).